Consider the following 457-residue polypeptide: Multidrug resistance protein MdtK (457 aa).

The Cytoplasmic segment spans residues 1–10; the sequence is MQKYISEARL. Residues 11-31 traverse the membrane as a helical segment; that stretch reads LLALAIPVILAQIAQTAMGFV. The Periplasmic portion of the chain corresponds to 32–52; sequence DTVMAGGYSATDMAAVAIGTS. A helical transmembrane segment spans residues 53-73; that stretch reads IWLPAILFGHGLLLALTPVIA. Residues 74 to 92 lie on the Cytoplasmic side of the membrane; sequence QLNGSGRRERIAHQVRQGF. The helical transmembrane segment at 93 to 113 threads the bilayer; the sequence is WLAGFVSVLIMLVLWNAGYII. At 114–126 the chain is on the periplasmic side; that stretch reads RSMENIDPALADK. Residues 127-147 traverse the membrane as a helical segment; it reads AVGYLRALLWGAPGYLFFQVA. Over 148–159 the chain is Cytoplasmic; that stretch reads RNQCEGLAKTKP. A helical transmembrane segment spans residues 160–180; that stretch reads GMVMGFIGLLVNIPVNYIFIY. The Periplasmic segment spans residues 181–191; that stretch reads GHFGMPELSGV. A helical transmembrane segment spans residues 192–212; the sequence is GCGVATAAVYWAMFLAMVSYI. Topologically, residues 213 to 242 are cytoplasmic; it reads KRARSMRDIRNEKGTAKPDPAVMKRLIQLG. A helical transmembrane segment spans residues 243–263; it reads LPIALALFFEVTLFAVVALLV. The Periplasmic portion of the chain corresponds to 264–275; it reads SPLGIVDVAGHQ. A helical membrane pass occupies residues 276–296; sequence IALNFSSLMFVLPMSLAAAVT. Residues 297–313 are Cytoplasmic-facing; the sequence is IRVGYRLGQGSTLDAQT. A helical membrane pass occupies residues 314-334; that stretch reads AARTGLMVGVCMATLTAIFTV. The Periplasmic segment spans residues 335–349; it reads SLREQIALLYNDNPE. A helical membrane pass occupies residues 350-370; it reads VVTLAAHLMLLAAVYQISDSI. The Cytoplasmic segment spans residues 371–386; sequence QVIGSGILRGYKDTRS. A helical membrane pass occupies residues 387–407; sequence IFYITFTAYWVLGLPSGYILA. Over 408 to 417 the chain is Periplasmic; the sequence is LTDLVVEPMG. The helical transmembrane segment at 418–438 threads the bilayer; the sequence is PAGFWIGFIIGLTSAAIMMML. Residues 439 to 457 are Cytoplasmic-facing; the sequence is RMRFLQRLPSAIILQRASR.

The protein belongs to the multi antimicrobial extrusion (MATE) (TC 2.A.66.1) family. MdtK subfamily.

It localises to the cell inner membrane. Functionally, multidrug efflux pump that functions probably as a Na(+)/drug antiporter. The chain is Multidrug resistance protein MdtK from Shigella dysenteriae serotype 1 (strain Sd197).